The chain runs to 136 residues: Large ribosomal subunit protein uL16c (136 aa).

The disordered stretch occupies residues 1 to 20 (MLSPKRTRFRKQHRGRMKGK).

The protein belongs to the universal ribosomal protein uL16 family. Part of the 50S ribosomal subunit.

Its subcellular location is the plastid. The protein localises to the chloroplast. The protein is Large ribosomal subunit protein uL16c of Lolium perenne (Perennial ryegrass).